Consider the following 343-residue polypeptide: Protein RecA (343 aa).

ATP is bound at residue 66-73; the sequence is GPESSGKT.

This sequence belongs to the RecA family.

The protein localises to the cytoplasm. Its function is as follows. Can catalyze the hydrolysis of ATP in the presence of single-stranded DNA, the ATP-dependent uptake of single-stranded DNA by duplex DNA, and the ATP-dependent hybridization of homologous single-stranded DNAs. It interacts with LexA causing its activation and leading to its autocatalytic cleavage. This Dechloromonas aromatica (strain RCB) protein is Protein RecA.